We begin with the raw amino-acid sequence, 757 residues long: Filensin (757 aa).

Positions 1–39 are head; sequence MYRRSYVFQTRKEQYERAEEAPRAAEPDRLAEARAAAPN. S5 is subject to Phosphoserine. Residues 39-319 enclose the IF rod domain; that stretch reads NLAALQGLGE…RIIENEGNRL (281 aa). The coil 1A stretch occupies residues 40–74; sequence LAALQGLGERVAAHVQRARALEQRHAVLRRQLDAF. Residue A41 is modified to N-acetylalanine. Positions 75–83 are linker 1; it reads QRLDELAGP. Positions 84 to 183 are coil 1B; the sequence is EDALARHVEG…RYKKNLLEIQ (100 aa). Residues 184 to 200 are linker 12; the sequence is TYVTILQQIIQTTPQAA. A coil 2 region spans residues 201–319; the sequence is AITSGMREEK…RIIENEGNRL (119 aa). The segment at 320-756 is tail; sequence SSAFIETPIT…KKLGEKGSSS (437 aa). Phosphoserine occurs at positions 340 and 419. Disordered stretches follow at residues 406–436 and 493–705; these read EGES…GGKI and GVVV…PPRK. Residue G433 is the site of N-myristoyl glycine attachment. Residues 493–512 are compositionally biased toward low complexity; the sequence is GVVVSKGDDSVPPDSGVEPS. A Phosphoserine modification is found at S512. Basic and acidic residues predominate over residues 528 to 658; that stretch reads QEKEDGLKEE…KQDDQKEEGA (131 aa). Copy 1 of the repeat occupies 532-545; sequence DGLKEEGGPPEGKG. The segment at 532-622 is 7 X 14 AA tandem repeats; that stretch reads DGLKEEGGPP…EEEGPLQKKE (91 aa). Residues 546–552 form a 2; truncated repeat; that stretch reads EPPEGKG. A run of 5 repeats spans residues 553 to 566, 567 to 580, 581 to 594, 595 to 608, and 609 to 622. A phosphothreonine mark is found at T628 and T674. Phosphoserine is present on residues S701, S754, and S755.

Belongs to the intermediate filament family. As to quaternary structure, part of a complex required for lens intermediate filament formation composed of BFSP1, BFSP2 and CRYAA. Identified in a complex that contains VIM, EZR, AHNAK, BFSP1, BFSP2, ANK2, PLEC, PRX and spectrin. Found in a complex composed of PPL (via C-terminal linker domain), BFSP1 and BFSP2 in the retinal lens. Within the complex interacts with BFSP2. Interacts (via C-terminus) with MIP (via C-terminus) in aged lens fiber cells. In terms of processing, proteolytically cleaved during lens cell fiber differentiation with increased fragmentation as fiber cell age increases. Myristoylated at Gly-433 following proteolytic cleavage at Asp-432. Post-translationally, acetylated at Ala-41 following proteolytic cleavage at Leu-40. As to expression, abundantly expressed in both the inner and outer cortex of the retina, expressed at a lower level in the nucleus of the retina (at protein level). Detected in eye lens fiber cells (at protein level).

The protein localises to the cell membrane. It is found in the cytoplasm. It localises to the cytoskeleton. The protein resides in the cell cortex. In terms of biological role, required for the correct formation of lens intermediate filaments as part of a complex composed of BFSP1, BFSP2 and CRYAA. Involved in altering the calcium regulation of MIP water permeability. The polypeptide is Filensin (BFSP1) (Bos taurus (Bovine)).